Consider the following 174-residue polypeptide: RNA pyrophosphohydrolase (174 aa).

In terms of domain architecture, Nudix hydrolase spans 6-149 (GFRANVGIII…KRDVYRKVMK (144 aa)). The short motif at 38–59 (GGVDEGESAEQAMYRELYEEVG) is the Nudix box element.

The protein belongs to the Nudix hydrolase family. RppH subfamily. The cofactor is a divalent metal cation.

Accelerates the degradation of transcripts by removing pyrophosphate from the 5'-end of triphosphorylated RNA, leading to a more labile monophosphorylated state that can stimulate subsequent ribonuclease cleavage. The protein is RNA pyrophosphohydrolase of Shewanella loihica (strain ATCC BAA-1088 / PV-4).